Reading from the N-terminus, the 574-residue chain is Sulfate adenylyltransferase (574 aa).

The segment at 1–170 (MANTPHGGVL…LEAINRLEHY (170 aa)) is N-terminal. Residues 171 to 395 (DFLDLRFTPS…LREENPLPAE (225 aa)) form a catalytic region. Glutamine 198 contacts sulfate. ATP is bound by residues 198 to 201 (QTRN) and 292 to 295 (GRDH). Catalysis depends on residues threonine 199, arginine 200, and asparagine 201. Residue arginine 200 participates in sulfate binding. Alanine 296 contributes to the sulfate binding site. Methionine 334 serves as a coordination point for ATP. The interval 396-574 (KGFTVFMTGY…LESNGLLDRL (179 aa)) is allosteric regulation domain; adenylyl-sulfate kinase-like. Residues 435-438 (ENVR), arginine 452, 478-479 (IA), and lysine 516 each bind 3'-phosphoadenylyl sulfate.

The protein in the N-terminal section; belongs to the sulfate adenylyltransferase family. It in the C-terminal section; belongs to the APS kinase family. Homohexamer. Dimer of trimers.

It localises to the cytoplasm. It carries out the reaction sulfate + ATP + H(+) = adenosine 5'-phosphosulfate + diphosphate. It participates in sulfur metabolism; hydrogen sulfide biosynthesis; sulfite from sulfate: step 1/3. Allosterically inhibited by 3'-phosphoadenosine 5'-phosphosulfate (PAPS). Catalyzes the first intracellular reaction of sulfate assimilation, forming adenosine-5'-phosphosulfate (APS) from inorganic sulfate and ATP. Plays an important role in sulfate activation as a component of the biosynthesis pathway of sulfur-containing amino acids. This is Sulfate adenylyltransferase from Gibberella zeae (strain ATCC MYA-4620 / CBS 123657 / FGSC 9075 / NRRL 31084 / PH-1) (Wheat head blight fungus).